The chain runs to 994 residues: Myosin IA heavy chain (994 aa).

The 709-residue stretch at 12 to 720 (VGVEDLIMLT…PLFLLEDKRN (709 aa)) folds into the Myosin motor domain. Position 105 to 112 (105 to 112 (GESGAGKT)) interacts with ATP. Residues 574-654 (TFIPTDKKRP…RAGYCYRQTF (81 aa)) form an actin-binding region. 2 consecutive IQ domains span residues 723 to 744 (LNDL…KWYL) and 745 to 774 (RTLA…QSIS). The TH1 domain occupies 782–970 (RNRQSIKLSK…ANSPSFTAKA (189 aa)).

It belongs to the TRAFAC class myosin-kinesin ATPase superfamily. Myosin family. In terms of assembly, myosin I heavy chain is single-headed. Dimer of a heavy and a light chain. Inability to self-assemble into filaments.

Its function is as follows. Actin-based motor protein, possibly involved in a wide range of motile processes, such as cell movement across a surface, and extension and retraction of pseudopodia or lamellipodia. This is Myosin IA heavy chain (myoA) from Dictyostelium discoideum (Social amoeba).